We begin with the raw amino-acid sequence, 194 residues long: ATP synthase subunit b 1 (194 aa).

The helical transmembrane segment at 1–21 threads the bilayer; that stretch reads MLLGTVVTVLSTLPAIAYAMD.

This sequence belongs to the ATPase B chain family. F-type ATPases have 2 components, F(1) - the catalytic core - and F(0) - the membrane proton channel. F(1) has five subunits: alpha(3), beta(3), gamma(1), delta(1), epsilon(1). F(0) has three main subunits: a(1), b(2) and c(10-14). The alpha and beta chains form an alternating ring which encloses part of the gamma chain. F(1) is attached to F(0) by a central stalk formed by the gamma and epsilon chains, while a peripheral stalk is formed by the delta and b chains.

The protein localises to the cell inner membrane. Functionally, f(1)F(0) ATP synthase produces ATP from ADP in the presence of a proton or sodium gradient. F-type ATPases consist of two structural domains, F(1) containing the extramembraneous catalytic core and F(0) containing the membrane proton channel, linked together by a central stalk and a peripheral stalk. During catalysis, ATP synthesis in the catalytic domain of F(1) is coupled via a rotary mechanism of the central stalk subunits to proton translocation. Component of the F(0) channel, it forms part of the peripheral stalk, linking F(1) to F(0). This chain is ATP synthase subunit b 1, found in Granulibacter bethesdensis (strain ATCC BAA-1260 / CGDNIH1).